The sequence spans 160 residues: 2-C-methyl-D-erythritol 2,4-cyclodiphosphate synthase (160 aa).

Residues Asp-8 and His-10 each contribute to the a divalent metal cation site. Residues 8 to 10 and 34 to 35 each bind 4-CDP-2-C-methyl-D-erythritol 2-phosphate; these read DVH and HS. Position 42 (His-42) interacts with a divalent metal cation. Residues 56–58, 61–65, 100–106, 132–135, Phe-139, and Arg-142 contribute to the 4-CDP-2-C-methyl-D-erythritol 2-phosphate site; these read DIG, FPDTD, AQAPKML, and TTTE.

Belongs to the IspF family. As to quaternary structure, homotrimer. The cofactor is a divalent metal cation.

It carries out the reaction 4-CDP-2-C-methyl-D-erythritol 2-phosphate = 2-C-methyl-D-erythritol 2,4-cyclic diphosphate + CMP. Its pathway is isoprenoid biosynthesis; isopentenyl diphosphate biosynthesis via DXP pathway; isopentenyl diphosphate from 1-deoxy-D-xylulose 5-phosphate: step 4/6. Its function is as follows. Involved in the biosynthesis of isopentenyl diphosphate (IPP) and dimethylallyl diphosphate (DMAPP), two major building blocks of isoprenoid compounds. Catalyzes the conversion of 4-diphosphocytidyl-2-C-methyl-D-erythritol 2-phosphate (CDP-ME2P) to 2-C-methyl-D-erythritol 2,4-cyclodiphosphate (ME-CPP) with a corresponding release of cytidine 5-monophosphate (CMP). This chain is 2-C-methyl-D-erythritol 2,4-cyclodiphosphate synthase, found in Proteus mirabilis (strain HI4320).